Consider the following 658-residue polypeptide: PTS system 2-O-alpha-mannosyl-D-glycerate-specific EIIABC component (658 aa).

The Periplasmic portion of the chain corresponds to 1 to 313 (MVLFYRAHWR…TELKQALLSG (313 aa)). A PTS EIIA type-2 domain is found at 25–171 (TLTHRDALCL…DELLSALDDK (147 aa)). The active-site Tele-phosphohistidine intermediate; for EIIA activity is the H87. At H87 the chain carries Phosphohistidine; by HPr. Residues 186-282 (IVCVTACPAG…AEALIQQALT (97 aa)) form the PTS EIIB type-2 domain. The active-site Phosphocysteine intermediate; for EIIB activity is the C192. C192 bears the Phosphocysteine; by EIIA mark. A PTS EIIC type-2 domain is found at 306-641 (LKQALLSGIS…AISTAILLMW (336 aa)). Residues 314 to 334 (ISFAVPLIVAGGTVLAVAVLL) traverse the membrane as a helical segment. Residues 335–358 (SQIFGLQDLFNEENSWLWMYRKLG) lie on the Cytoplasmic side of the membrane. The helical transmembrane segment at 359-379 (GGLLGILMVPVLAAYTAYSLA) threads the bilayer. At 380–389 (DKPALAPGFA) the chain is on the periplasmic side. A helical membrane pass occupies residues 390–410 (AGLAANMIGSGFLGAVVGGLI). The Cytoplasmic portion of the chain corresponds to 411 to 433 (AGYLMRWVKNHLRLSSKFNGFLT). The helical transmembrane segment at 434-454 (FYLYPVLGTLGAGSLMLFVVG) threads the bilayer. At 455-474 (EPVAWINNSLTAWLNGLSGS) the chain is on the periplasmic side. The chain crosses the membrane as a helical span at residues 475–495 (NALLLGAILGFMCSFDLGGPV). At 496 to 500 (NKAAY) the chain is on the cytoplasmic side. The helical transmembrane segment at 501–521 (AFCLGAMANGVYGPYAIFASV) threads the bilayer. The Periplasmic portion of the chain corresponds to 522-551 (KMVSAFTVTASTMLAPRLFKEFEIETGKST). A helical transmembrane segment spans residues 552 to 572 (WLLGLAGITEGAIPMAIEDPL). Position 573 (R573) is a topological domain, cytoplasmic. The chain crosses the membrane as a helical span at residues 574-594 (VIGSFVLGSMVTGAIVGAMNI). The Periplasmic portion of the chain corresponds to 595-620 (GLSTPGAGIFSLFLLHDNGAGGVMAA). Residues 621–641 (IGWFGAALVGAAISTAILLMW) form a helical membrane-spanning segment. At 642 to 658 (RRHAVKHGNYLTDGVMP) the chain is on the cytoplasmic side.

It localises to the cell inner membrane. It catalyses the reaction (2R)-2-O-(alpha-D-mannosyl)-glycerate(out) + N(pros)-phospho-L-histidyl-[protein] = (2R)-2-O-(6-phospho-alpha-D-mannosyl)-glycerate(in) + L-histidyl-[protein]. Its function is as follows. The phosphoenolpyruvate-dependent sugar phosphotransferase system (sugar PTS), a major carbohydrate active transport system, catalyzes the phosphorylation of incoming sugar substrates concomitantly with their translocation across the cell membrane. This system is involved in mannosyl-D-glycerate transport. Also involved in thermoinduction of ompC. The sequence is that of PTS system 2-O-alpha-mannosyl-D-glycerate-specific EIIABC component from Escherichia coli (strain K12).